Consider the following 864-residue polypeptide: Leucine--tRNA ligase (864 aa).

Positions Pro-42 to His-52 match the 'HIGH' region motif. The short motif at Lys-624–Ser-628 is the 'KMSKS' region element. ATP is bound at residue Lys-627.

Belongs to the class-I aminoacyl-tRNA synthetase family.

It localises to the cytoplasm. It carries out the reaction tRNA(Leu) + L-leucine + ATP = L-leucyl-tRNA(Leu) + AMP + diphosphate. This is Leucine--tRNA ligase from Burkholderia lata (strain ATCC 17760 / DSM 23089 / LMG 22485 / NCIMB 9086 / R18194 / 383).